Consider the following 175-residue polypeptide: Small ribosomal subunit protein mS38 (175 aa).

The protein belongs to the mitochondrion-specific ribosomal protein mS38 family. Component of the mitochondrial small ribosomal subunit (mt-SSU). Mature yeast 74S mitochondrial ribosomes consist of a small (37S) and a large (54S) subunit. The 37S small subunit contains a 15S ribosomal RNA (15S mt-rRNA) and at least 32 different proteins. The 54S large subunit contains a 21S rRNA (21S mt-rRNA) and at least 45 different proteins.

It localises to the mitochondrion. The protein resides in the mitochondrion inner membrane. Its function is as follows. Component of the mitochondrial ribosome (mitoribosome), a dedicated translation machinery responsible for the synthesis of mitochondrial genome-encoded proteins, including at least some of the essential transmembrane subunits of the mitochondrial respiratory chain. The mitoribosomes are attached to the mitochondrial inner membrane and translation products are cotranslationally integrated into the membrane. mS38 is also involved in the splicing of the COX1 mRNA. This chain is Small ribosomal subunit protein mS38 (cox24), found in Schizosaccharomyces pombe (strain 972 / ATCC 24843) (Fission yeast).